Reading from the N-terminus, the 864-residue chain is Probable LRR receptor-like serine/threonine-protein kinase At1g07550 (864 aa).

The N-terminal stretch at 1-23 (MDTCTRLLFAACATLSILHLVQS) is a signal peptide. Residues 24-507 (QNQQGFISLD…SCGTRFPTAA (484 aa)) lie on the Extracellular side of the membrane. N-linked (GlcNAc...) asparagine glycosylation is found at Asn49, Asn229, Asn256, Asn289, Asn432, Asn445, and Asn464. LRR repeat units lie at residues 411-434 (RIVKLDLSSSGLNGVIPPSIQNLT), 435-457 (QLQELDLSQNNLTGKVPEFLAKM), and 459-480 (YLLVINLSGNKLSGLVPQALLD). A helical membrane pass occupies residues 508 to 528 (VAASVSAVAIIILVLVLIFVL). The Cytoplasmic segment spans residues 529–864 (RRRKPSAGKV…VDTEINPKAR (336 aa)). Position 551 is a phosphothreonine (Thr551). A Protein kinase domain is found at 560–831 (NNFQVVIGKG…QVVHVLNECL (272 aa)). ATP contacts are provided by residues 566–574 (IGKGGFGVV) and Lys587. The residue at position 632 (Tyr632) is a Phosphotyrosine. The Proton acceptor role is filled by Asp684. Residues Thr718 and Thr723 each carry the phosphothreonine modification. A Phosphotyrosine modification is found at Tyr731.

This sequence belongs to the protein kinase superfamily. Ser/Thr protein kinase family.

It is found in the membrane. The catalysed reaction is L-seryl-[protein] + ATP = O-phospho-L-seryl-[protein] + ADP + H(+). The enzyme catalyses L-threonyl-[protein] + ATP = O-phospho-L-threonyl-[protein] + ADP + H(+). The chain is Probable LRR receptor-like serine/threonine-protein kinase At1g07550 from Arabidopsis thaliana (Mouse-ear cress).